A 213-amino-acid polypeptide reads, in one-letter code: Chromosome segregation in meiosis protein 2 (213 aa).

Belongs to the CSM2 family. Component of the SHU complex composed of at least CSM2, PSY3, SHU1 and SHU2.

It localises to the cytoplasm. The protein resides in the nucleus. Functionally, involved in chromosome segregation during meiosis. Promotes efficient recombinational repair and functions in the protection of the genome from spontaneous and induced DNA damage like mutations and gross chromosomal rearrangements (GCRs). The polypeptide is Chromosome segregation in meiosis protein 2 (CSM2) (Saccharomyces cerevisiae (strain ATCC 204508 / S288c) (Baker's yeast)).